Consider the following 192-residue polypeptide: Protein GrpE (192 aa).

Belongs to the GrpE family. As to quaternary structure, homodimer.

The protein resides in the cytoplasm. In terms of biological role, participates actively in the response to hyperosmotic and heat shock by preventing the aggregation of stress-denatured proteins, in association with DnaK and GrpE. It is the nucleotide exchange factor for DnaK and may function as a thermosensor. Unfolded proteins bind initially to DnaJ; upon interaction with the DnaJ-bound protein, DnaK hydrolyzes its bound ATP, resulting in the formation of a stable complex. GrpE releases ADP from DnaK; ATP binding to DnaK triggers the release of the substrate protein, thus completing the reaction cycle. Several rounds of ATP-dependent interactions between DnaJ, DnaK and GrpE are required for fully efficient folding. This is Protein GrpE from Neisseria gonorrhoeae (strain NCCP11945).